The chain runs to 29 residues: Putative membrane protein PmrR (29 aa).

The helical transmembrane segment at 5 to 27 (VYESLTTVFSVLVVSSFLYIWFA) threads the bilayer.

It is found in the cell inner membrane. Functionally, may bind to BasS and modulate its sensor kinase activity. The protein is Putative membrane protein PmrR (pmrR) of Escherichia coli (strain K12).